A 320-amino-acid polypeptide reads, in one-letter code: MPDPMRSYLDFEKPVAELDSKIDELRALAASGSDISEEISSIEEKAAQALKDLYANLTPWQKTQVARHPQRPHFSDFVKGLITEFTPLAGDRKFGEDEALIGGFGRFRGESICVIGQEKGATTESRLKHNFGMARPEGYRKAVRLMDMADRFDIPVLSLVDSAGAYPGIGAEERGQAEAIARSTDACLSLGVANIAVIIGEGGSGGAIAIATANRVLMLEHAIYSVISPEAASSILWRDSSKAQEAATNMKITAQDLLRFGVIDAILKEPAGGAHRDPAAVIALTGDAIAGALNDLRNLDRDSLRQQRRQKFIDIGRKLG.

Residues 41 to 295 (SIEEKAAQAL…GDAIAGALND (255 aa)) form the CoA carboxyltransferase C-terminal domain.

This sequence belongs to the AccA family. In terms of assembly, acetyl-CoA carboxylase is a heterohexamer composed of biotin carboxyl carrier protein (AccB), biotin carboxylase (AccC) and two subunits each of ACCase subunit alpha (AccA) and ACCase subunit beta (AccD).

The protein resides in the cytoplasm. It carries out the reaction N(6)-carboxybiotinyl-L-lysyl-[protein] + acetyl-CoA = N(6)-biotinyl-L-lysyl-[protein] + malonyl-CoA. Its pathway is lipid metabolism; malonyl-CoA biosynthesis; malonyl-CoA from acetyl-CoA: step 1/1. Component of the acetyl coenzyme A carboxylase (ACC) complex. First, biotin carboxylase catalyzes the carboxylation of biotin on its carrier protein (BCCP) and then the CO(2) group is transferred by the carboxyltransferase to acetyl-CoA to form malonyl-CoA. The sequence is that of Acetyl-coenzyme A carboxylase carboxyl transferase subunit alpha from Nitrobacter winogradskyi (strain ATCC 25391 / DSM 10237 / CIP 104748 / NCIMB 11846 / Nb-255).